Here is a 368-residue protein sequence, read N- to C-terminus: Spermidine/putrescine import ATP-binding protein PotA (368 aa).

In terms of domain architecture, ABC transporter spans 8–238; it reads IELRGVTKNF…PANLYVARFV (231 aa). ATP is bound at residue 40–47; that stretch reads GPSGCGKT.

It belongs to the ABC transporter superfamily. Spermidine/putrescine importer (TC 3.A.1.11.1) family. The complex is composed of two ATP-binding proteins (PotA), two transmembrane proteins (PotB and PotC) and a solute-binding protein (PotD).

It localises to the cell inner membrane. The enzyme catalyses ATP + H2O + polyamine-[polyamine-binding protein]Side 1 = ADP + phosphate + polyamineSide 2 + [polyamine-binding protein]Side 1.. In terms of biological role, part of the ABC transporter complex PotABCD involved in spermidine/putrescine import. Responsible for energy coupling to the transport system. The chain is Spermidine/putrescine import ATP-binding protein PotA from Nitratidesulfovibrio vulgaris (strain ATCC 29579 / DSM 644 / CCUG 34227 / NCIMB 8303 / VKM B-1760 / Hildenborough) (Desulfovibrio vulgaris).